We begin with the raw amino-acid sequence, 251 residues long: Probable transcriptional regulatory protein MSMEG_2940/MSMEI_2866 (251 aa).

This sequence belongs to the TACO1 family.

It localises to the cytoplasm. This chain is Probable transcriptional regulatory protein MSMEG_2940/MSMEI_2866, found in Mycolicibacterium smegmatis (strain ATCC 700084 / mc(2)155) (Mycobacterium smegmatis).